Here is a 288-residue protein sequence, read N- to C-terminus: Protein PGR (288 aa).

Helical transmembrane passes span 1 to 21 (METSPQFRLIFAVIISSLIAF), 29 to 49 (LDLSGGIAGFLVMTIHFTAGF), 91 to 111 (VLCNSGIASVLVVIACTLTGW), 123 to 143 (IVTALIGGIIGHYACCNGDTW), 177 to 197 (LLAALAAGTTVGLTFLIFGLF), 210 to 230 (LLVIPLSALAGLCGSLIDSIL), and 268 to 288 (VNFVSILLTSFLTSIASVYIF).

This sequence belongs to the TMEM19 family. In terms of tissue distribution, expressed in the vasculature of leaves, roots, inflorescences, siliques, anther filaments and sepals. Detected primarily in the phloem tissues, including in the root ans shoot apical meristems.

Its subcellular location is the cell membrane. Involved in the glucose-triggered developmental leaf growth process. This chain is Protein PGR, found in Arabidopsis thaliana (Mouse-ear cress).